The chain runs to 150 residues: Large ribosomal subunit protein bL9 (150 aa).

Belongs to the bacterial ribosomal protein bL9 family.

In terms of biological role, binds to the 23S rRNA. The chain is Large ribosomal subunit protein bL9 from Enterococcus faecalis (strain ATCC 700802 / V583).